The sequence spans 324 residues: CYFIP-related Rac1 interactor B (324 aa).

Glycine 2 is lipidated: N-myristoyl glycine. Residue lysine 74 forms a Glycyl lysine isopeptide (Lys-Gly) (interchain with G-Cter in ubiquitin) linkage.

This sequence belongs to the CYRI family. In terms of assembly, interacts with RAC1 (GTP-bound form preferentially). Post-translationally, ubiquitinated at Lys-74 upon Salmonella bacterial infection.

The protein localises to the membrane. It is found in the mitochondrion. Functionally, negatively regulates RAC1 signaling and RAC1-driven cytoskeletal remodeling. Regulates chemotaxis, cell migration and epithelial polarization by controlling the polarity, plasticity, duration and extent of protrusions. Limits Rac1 mediated activation of the Scar/WAVE complex, focuses protrusion signals and regulates pseudopod complexity by inhibiting Scar/WAVE-induced actin polymerization. Protects against Salmonella bacterial infection. Attenuates processes such as macropinocytosis, phagocytosis and cell migration and restrict sopE-mediated bacterial entry. Also restricts infection mediated by Mycobacterium tuberculosis and Listeria monocytogenes. Involved in the regulation of mitochondrial dynamics and oxidative stress. The sequence is that of CYFIP-related Rac1 interactor B from Homo sapiens (Human).